The following is an 878-amino-acid chain: Alanine--tRNA ligase (878 aa).

Zn(2+) contacts are provided by His568, His572, Cys669, and His673.

It belongs to the class-II aminoacyl-tRNA synthetase family. Zn(2+) is required as a cofactor.

It localises to the cytoplasm. It carries out the reaction tRNA(Ala) + L-alanine + ATP = L-alanyl-tRNA(Ala) + AMP + diphosphate. Functionally, catalyzes the attachment of alanine to tRNA(Ala) in a two-step reaction: alanine is first activated by ATP to form Ala-AMP and then transferred to the acceptor end of tRNA(Ala). Also edits incorrectly charged Ser-tRNA(Ala) and Gly-tRNA(Ala) via its editing domain. The sequence is that of Alanine--tRNA ligase from Polaromonas sp. (strain JS666 / ATCC BAA-500).